A 357-amino-acid polypeptide reads, in one-letter code: 3-isopropylmalate dehydrogenase (357 aa).

Gly76–Glu89 contacts NAD(+). Residues Arg96, Arg106, Arg134, and Asp224 each contribute to the substrate site. 3 residues coordinate Mg(2+): Asp224, Asp248, and Asp252. Position 282–294 (Gly282–Asn294) interacts with NAD(+).

This sequence belongs to the isocitrate and isopropylmalate dehydrogenases family. LeuB type 1 subfamily. In terms of assembly, homodimer. Mg(2+) serves as cofactor. Mn(2+) is required as a cofactor.

It is found in the cytoplasm. It catalyses the reaction (2R,3S)-3-isopropylmalate + NAD(+) = 4-methyl-2-oxopentanoate + CO2 + NADH. It functions in the pathway amino-acid biosynthesis; L-leucine biosynthesis; L-leucine from 3-methyl-2-oxobutanoate: step 3/4. In terms of biological role, catalyzes the oxidation of 3-carboxy-2-hydroxy-4-methylpentanoate (3-isopropylmalate) to 3-carboxy-4-methyl-2-oxopentanoate. The product decarboxylates to 4-methyl-2 oxopentanoate. The polypeptide is 3-isopropylmalate dehydrogenase (Xanthomonas campestris pv. campestris (strain 8004)).